The following is a 376-amino-acid chain: Queuine tRNA-ribosyltransferase (376 aa).

Asp93 acts as the Proton acceptor in catalysis. Residues 93–97, Asp147, Gln190, and Gly217 contribute to the substrate site; that span reads DSGGF. Positions 248–254 are RNA binding; the sequence is GVGKPDD. Asp267 functions as the Nucleophile in the catalytic mechanism. Zn(2+)-binding residues include Cys305, Cys307, Cys310, and His336.

This sequence belongs to the queuine tRNA-ribosyltransferase family. Homodimer. Within each dimer, one monomer is responsible for RNA recognition and catalysis, while the other monomer binds to the replacement base PreQ1. It depends on Zn(2+) as a cofactor.

It carries out the reaction 7-aminomethyl-7-carbaguanine + guanosine(34) in tRNA = 7-aminomethyl-7-carbaguanosine(34) in tRNA + guanine. It participates in tRNA modification; tRNA-queuosine biosynthesis. Its function is as follows. Catalyzes the base-exchange of a guanine (G) residue with the queuine precursor 7-aminomethyl-7-deazaguanine (PreQ1) at position 34 (anticodon wobble position) in tRNAs with GU(N) anticodons (tRNA-Asp, -Asn, -His and -Tyr). Catalysis occurs through a double-displacement mechanism. The nucleophile active site attacks the C1' of nucleotide 34 to detach the guanine base from the RNA, forming a covalent enzyme-RNA intermediate. The proton acceptor active site deprotonates the incoming PreQ1, allowing a nucleophilic attack on the C1' of the ribose to form the product. After dissociation, two additional enzymatic reactions on the tRNA convert PreQ1 to queuine (Q), resulting in the hypermodified nucleoside queuosine (7-(((4,5-cis-dihydroxy-2-cyclopenten-1-yl)amino)methyl)-7-deazaguanosine). The polypeptide is Queuine tRNA-ribosyltransferase (Ruegeria sp. (strain TM1040) (Silicibacter sp.)).